The primary structure comprises 137 residues: Maltose regulon regulatory protein MalI (137 aa).

An HTH lacI-type domain is found at 6-60; that stretch reads VTITEVAKHAGVSVTTVSMVLGNKGRISPDTIEKVNASVEALGYIRNRAAANLRS. The segment at residues 8 to 27 is a DNA-binding region (H-T-H motif); sequence ITEVAKHAGVSVTTVSMVLG.

Its function is as follows. Repressor for the malX and malY genes. The sequence is that of Maltose regulon regulatory protein MalI (malI) from Vibrio furnissii.